Here is a 427-residue protein sequence, read N- to C-terminus: Glutamyl-tRNA(Gln) amidotransferase subunit D (427 aa).

An Asparaginase/glutaminase domain is found at E74–N407. Active-site residues include T84, T160, D161, and K240.

The protein belongs to the asparaginase 1 family. GatD subfamily. Heterodimer of GatD and GatE.

The enzyme catalyses L-glutamyl-tRNA(Gln) + L-glutamine + ATP + H2O = L-glutaminyl-tRNA(Gln) + L-glutamate + ADP + phosphate + H(+). Allows the formation of correctly charged Gln-tRNA(Gln) through the transamidation of misacylated Glu-tRNA(Gln) in organisms which lack glutaminyl-tRNA synthetase. The reaction takes place in the presence of glutamine and ATP through an activated gamma-phospho-Glu-tRNA(Gln). The GatDE system is specific for glutamate and does not act on aspartate. This Aeropyrum pernix (strain ATCC 700893 / DSM 11879 / JCM 9820 / NBRC 100138 / K1) protein is Glutamyl-tRNA(Gln) amidotransferase subunit D.